The primary structure comprises 420 residues: Glutamyl-tRNA reductase (420 aa).

Residues 49–52 (TCNR), serine 109, 114–116 (EPQ), and glutamine 120 each bind substrate. The active-site Nucleophile is cysteine 50. An NADP(+)-binding site is contributed by 189 to 194 (GAGETI).

Belongs to the glutamyl-tRNA reductase family. In terms of assembly, homodimer.

It carries out the reaction (S)-4-amino-5-oxopentanoate + tRNA(Glu) + NADP(+) = L-glutamyl-tRNA(Glu) + NADPH + H(+). The protein operates within porphyrin-containing compound metabolism; protoporphyrin-IX biosynthesis; 5-aminolevulinate from L-glutamyl-tRNA(Glu): step 1/2. Functionally, catalyzes the NADPH-dependent reduction of glutamyl-tRNA(Glu) to glutamate 1-semialdehyde (GSA). The polypeptide is Glutamyl-tRNA reductase (Yersinia pseudotuberculosis serotype O:1b (strain IP 31758)).